A 334-amino-acid polypeptide reads, in one-letter code: Malate dehydrogenase, cytoplasmic (334 aa).

Ser-2 carries the N-acetylserine modification. NAD(+)-binding positions include 11-17 (GAAGQIA) and Asp-42. The substrate site is built by Arg-92 and Arg-98. Position 105 (Asn-105) interacts with NAD(+). Lys-110 carries the post-translational modification N6-succinyllysine. Gln-112 lines the NAD(+) pocket. N6-acetyllysine occurs at positions 118 and 121. Residue 129 to 131 (VGN) coordinates NAD(+). Residues Asn-131 and Arg-162 each contribute to the substrate site. His-187 acts as the Proton acceptor in catalysis. Position 214 is an N6-succinyllysine (Lys-214). Residue Ser-217 is modified to Phosphoserine. Position 230 is an omega-N-methylarginine (Arg-230). Phosphoserine is present on Ser-241. Lys-298 carries the N6-acetyllysine; alternate modification. At Lys-298 the chain carries N6-succinyllysine; alternate. At Ser-309 the chain carries Phosphoserine. At Lys-318 the chain carries N6-succinyllysine. Residues Ser-332 and Ser-333 each carry the phosphoserine modification.

It belongs to the LDH/MDH superfamily. MDH type 2 family. In terms of assembly, homodimer. Post-translationally, ISGylated. Acetylation at Lys-118 dramatically enhances enzymatic activity and promotes adipogenic differentiation.

The protein resides in the cytoplasm. The protein localises to the cytosol. It carries out the reaction (S)-malate + NAD(+) = oxaloacetate + NADH + H(+). The enzyme catalyses (2R)-2-hydroxy-3-(4-hydroxyphenyl)propanoate + NAD(+) = 3-(4-hydroxyphenyl)pyruvate + NADH + H(+). The catalysed reaction is (S)-2-hydroxyglutarate + NAD(+) = 2-oxoglutarate + NADH + H(+). Catalyzes the reduction of aromatic alpha-keto acids in the presence of NADH. Plays essential roles in the malate-aspartate shuttle and the tricarboxylic acid cycle, important in mitochondrial NADH supply for oxidative phosphorylation. Catalyzes the reduction of 2-oxoglutarate to 2-hydroxyglutarate, leading to elevated reactive oxygen species (ROS). The polypeptide is Malate dehydrogenase, cytoplasmic (Homo sapiens (Human)).